Reading from the N-terminus, the 63-residue chain is UPF0337 protein RA1131 (63 aa).

Positions 1-63 are disordered; sequence MGSAKDKVAG…DAVKGAVDKT (63 aa). Residues 34-49 show a composition bias toward low complexity; it reads AKGAAQEAKGGAQQAK. The span at 51-63 shows a compositional bias: basic and acidic residues; that stretch reads KLKDAVKGAVDKT.

This sequence belongs to the UPF0337 (CsbD) family.

This Rhizobium meliloti (strain 1021) (Ensifer meliloti) protein is UPF0337 protein RA1131.